The sequence spans 337 residues: ERI1 exoribonuclease 3 (337 aa).

Residues 146–320 (FLVLDFEATC…DDCKNIANIM (175 aa)) enclose the Exonuclease domain. Aspartate 150, glutamate 152, and aspartate 249 together coordinate Mg(2+). Glutamate 152 acts as the Proton acceptor in catalysis. Glutamate 152 serves as a coordination point for AMP. The active-site Proton acceptor is histidine 307. Histidine 307 is a binding site for AMP. Aspartate 312 provides a ligand contact to Mg(2+).

In terms of assembly, interacts with PRNP. Mg(2+) serves as cofactor.

The chain is ERI1 exoribonuclease 3 (ERI3) from Bos taurus (Bovine).